A 309-amino-acid chain; its full sequence is Tagatose-6-phosphate kinase (309 aa).

This sequence belongs to the carbohydrate kinase PfkB family. LacC subfamily.

It catalyses the reaction D-tagatofuranose 6-phosphate + ATP = D-tagatofuranose 1,6-bisphosphate + ADP + H(+). It functions in the pathway carbohydrate metabolism; D-tagatose 6-phosphate degradation; D-glyceraldehyde 3-phosphate and glycerone phosphate from D-tagatose 6-phosphate: step 1/2. The polypeptide is Tagatose-6-phosphate kinase (Streptococcus pneumoniae (strain 70585)).